Consider the following 623-residue polypeptide: tRNA 5-methylaminomethyl-2-thiouridine biosynthesis bifunctional protein MnmC (623 aa).

Positions 1–244 (MCVSSSIQTA…KREMLKAIWP (244 aa)) are tRNA (mnm(5)s(2)U34)-methyltransferase. Residues 268-623 (IGAGIAGLHC…VKIKKPYYSS (356 aa)) are FAD-dependent cmnm(5)s(2)U34 oxidoreductase.

This sequence in the N-terminal section; belongs to the methyltransferase superfamily. tRNA (mnm(5)s(2)U34)-methyltransferase family. It in the C-terminal section; belongs to the DAO family. It depends on FAD as a cofactor.

The protein localises to the cytoplasm. The enzyme catalyses 5-aminomethyl-2-thiouridine(34) in tRNA + S-adenosyl-L-methionine = 5-methylaminomethyl-2-thiouridine(34) in tRNA + S-adenosyl-L-homocysteine + H(+). Catalyzes the last two steps in the biosynthesis of 5-methylaminomethyl-2-thiouridine (mnm(5)s(2)U) at the wobble position (U34) in tRNA. Catalyzes the FAD-dependent demodification of cmnm(5)s(2)U34 to nm(5)s(2)U34, followed by the transfer of a methyl group from S-adenosyl-L-methionine to nm(5)s(2)U34, to form mnm(5)s(2)U34. This is tRNA 5-methylaminomethyl-2-thiouridine biosynthesis bifunctional protein MnmC from Acinetobacter baylyi (strain ATCC 33305 / BD413 / ADP1).